Reading from the N-terminus, the 212-residue chain is Transcriptional regulator GfcR (212 aa).

A disordered region spans residues 38 to 60; sequence LVERSGTGTEPDTSDDGGPHDIH.

This sequence belongs to the purine/pyrimidine phosphoribosyltransferase family. GfcR subfamily.

Functionally, DNA-binding transcriptional regulator that functions as a regulator of central sugar catabolic pathways. The polypeptide is Transcriptional regulator GfcR (Haloarcula marismortui (strain ATCC 43049 / DSM 3752 / JCM 8966 / VKM B-1809) (Halobacterium marismortui)).